The chain runs to 194 residues: A-type ATP synthase subunit E (194 aa).

This sequence belongs to the V-ATPase E subunit family. As to quaternary structure, has multiple subunits with at least A(3), B(3), C, D, E, F, H, I and proteolipid K(x).

It is found in the cell membrane. Its function is as follows. Component of the A-type ATP synthase that produces ATP from ADP in the presence of a proton gradient across the membrane. The polypeptide is A-type ATP synthase subunit E (Saccharolobus solfataricus (strain ATCC 35092 / DSM 1617 / JCM 11322 / P2) (Sulfolobus solfataricus)).